The chain runs to 96 residues: Xylulose kinase (96 aa).

71 to 72 (QH) lines the substrate pocket.

It belongs to the FGGY kinase family.

The enzyme catalyses D-xylulose + ATP = D-xylulose 5-phosphate + ADP + H(+). In terms of biological role, catalyzes the phosphorylation of D-xylulose to D-xylulose 5-phosphate. This Arthrobacter sp. (strain NRRL B3728) protein is Xylulose kinase.